Reading from the N-terminus, the 513-residue chain is Arabinoxylan arabinofuranohydrolase (513 aa).

The signal sequence occupies residues 1–26 (MRKKCSVCLWILVLLLSCLSGKSAYA). The Proton acceptor role is filled by Asp50. The active-site Proton donor is Glu251. Position 314 (Asn314) interacts with substrate. Positions 382 to 511 (NRVEAETFAW…LFNFDYWQFT (130 aa)) constitute a CBM6 domain. 5 residues coordinate Ca(2+): Glu385, Glu387, Asn409, Gln410, and Asp506.

The protein resides in the secreted. The catalysed reaction is Hydrolysis of terminal non-reducing alpha-L-arabinofuranoside residues in alpha-L-arabinosides.. It participates in glycan degradation; xylan degradation. Its function is as follows. Cleaves arabinose units from O-2- or O-3-monosubstituted xylose residues, thereby assisting in arabinoxylan (AX) and short-chain arabinoxylo-oligosaccharide (AXOS) degradation. Is more active on wheat bran AXOS than on wheat water-extractable AX and rye water-extractable AX. Does not display endoxylanase, xylosidase or arabinanase activity. In Bacillus subtilis (strain 168), this protein is Arabinoxylan arabinofuranohydrolase (xynD).